The chain runs to 420 residues: Protein ECERIFERUM 26-like (420 aa).

Belongs to the plant acyltransferase family. As to expression, highly expressed in flowers. Expressed in leaves.

Involved in biosynthesis of the epicuticular wax. Plays a role in very-long-chain fatty acid (VLCFA) biosynthesis and is required for VLCFA elongation in leaf. Despite its classification as a BAHD acyltransferase based on sequence homology, CER26L does not seem to share the catalytic mechanism of the members of the BAHD family. In Arabidopsis thaliana (Mouse-ear cress), this protein is Protein ECERIFERUM 26-like (CER26L).